We begin with the raw amino-acid sequence, 340 residues long: Anthranilate phosphoribosyltransferase (340 aa).

5-phospho-alpha-D-ribose 1-diphosphate is bound by residues Gly83, 86–87 (GD), Thr91, 93–96 (NIST), 111–119 (KHGNRSITS), and Ser123. Gly83 is a binding site for anthranilate. Ser95 is a binding site for Mg(2+). Residue Asn114 coordinates anthranilate. Arg169 serves as a coordination point for anthranilate. Positions 228 and 229 each coordinate Mg(2+).

The protein belongs to the anthranilate phosphoribosyltransferase family. Homodimer. The cofactor is Mg(2+).

It catalyses the reaction N-(5-phospho-beta-D-ribosyl)anthranilate + diphosphate = 5-phospho-alpha-D-ribose 1-diphosphate + anthranilate. Its pathway is amino-acid biosynthesis; L-tryptophan biosynthesis; L-tryptophan from chorismate: step 2/5. Catalyzes the transfer of the phosphoribosyl group of 5-phosphorylribose-1-pyrophosphate (PRPP) to anthranilate to yield N-(5'-phosphoribosyl)-anthranilate (PRA). This Solibacter usitatus (strain Ellin6076) protein is Anthranilate phosphoribosyltransferase.